We begin with the raw amino-acid sequence, 449 residues long: Glutamate--tRNA ligase 2 (449 aa).

The 'HIGH' region motif lies at 11 to 21; it reads PSPTGFLHIGN. The 'KMSKS' region signature appears at 242–246; that stretch reads GLSKR. An ATP-binding site is contributed by Lys-245.

It belongs to the class-I aminoacyl-tRNA synthetase family. Glutamate--tRNA ligase type 1 subfamily. As to quaternary structure, monomer.

The protein localises to the cytoplasm. The enzyme catalyses tRNA(Glu) + L-glutamate + ATP = L-glutamyl-tRNA(Glu) + AMP + diphosphate. Catalyzes the attachment of glutamate to tRNA(Glu) in a two-step reaction: glutamate is first activated by ATP to form Glu-AMP and then transferred to the acceptor end of tRNA(Glu). The polypeptide is Glutamate--tRNA ligase 2 (Methylorubrum populi (strain ATCC BAA-705 / NCIMB 13946 / BJ001) (Methylobacterium populi)).